Here is a 311-residue protein sequence, read N- to C-terminus: Probable flavin reductase (311 aa).

Residues 38 to 41, 55 to 61, 88 to 89, and arginine 95 contribute to the FMN site; these read TANS, CLAKSSR, and FA.

It belongs to the non-flavoprotein flavin reductase family.

The sequence is that of Probable flavin reductase from Rhizobium meliloti (strain 1021) (Ensifer meliloti).